A 557-amino-acid polypeptide reads, in one-letter code: Small ribosomal subunit protein bS1 (557 aa).

6 consecutive S1 motif domains span residues 21–87 (GSIV…LSRE), 105–171 (SATV…VSRR), 192–260 (GMEV…LGLK), 277–347 (GTKL…LGLK), 364–434 (GDRV…LGVK), and 451–520 (GAIV…LSIR).

The protein belongs to the bacterial ribosomal protein bS1 family.

In terms of biological role, binds mRNA; thus facilitating recognition of the initiation point. It is needed to translate mRNA with a short Shine-Dalgarno (SD) purine-rich sequence. The sequence is that of Small ribosomal subunit protein bS1 (rpsA) from Dickeya dadantii (strain 3937) (Erwinia chrysanthemi (strain 3937)).